Reading from the N-terminus, the 279-residue chain is Tryptophan synthase alpha chain (279 aa).

Active-site proton acceptor residues include glutamate 50 and aspartate 61.

It belongs to the TrpA family. In terms of assembly, tetramer of two alpha and two beta chains.

It catalyses the reaction (1S,2R)-1-C-(indol-3-yl)glycerol 3-phosphate + L-serine = D-glyceraldehyde 3-phosphate + L-tryptophan + H2O. The protein operates within amino-acid biosynthesis; L-tryptophan biosynthesis; L-tryptophan from chorismate: step 5/5. The alpha subunit is responsible for the aldol cleavage of indoleglycerol phosphate to indole and glyceraldehyde 3-phosphate. In Rhizobium rhizogenes (strain K84 / ATCC BAA-868) (Agrobacterium radiobacter), this protein is Tryptophan synthase alpha chain.